A 56-amino-acid polypeptide reads, in one-letter code: Large ribosomal subunit protein bL33 (56 aa).

Belongs to the bacterial ribosomal protein bL33 family.

The polypeptide is Large ribosomal subunit protein bL33 (Rickettsia africae (strain ESF-5)).